The chain runs to 1043 residues: NACHT, LRR and PYD domains-containing protein 13 (1043 aa).

The region spanning 1 to 107 is the Pyrin domain; sequence MNFSVITCPN…CEKVRAEMKE (107 aa). The region spanning 229 to 558 is the NACHT domain; that stretch reads QTIVLVGRAG…VLEEPREFPP (330 aa). ATP is bound at residue 235–242; it reads GRAGVGKT. LRR repeat units follow at residues 725 to 749, 781 to 804, 837 to 864, 894 to 917, 923 to 946, 951 to 978, and 1007 to 1030; these read NENL…LCLA, NSKL…ILKA, IQHV…ALTH, NRSL…FLCE, DGNL…ELAN, NHNV…ALKP, and SKSL…MLCK.

This sequence belongs to the NLRP family.

In terms of biological role, involved in inflammation. The chain is NACHT, LRR and PYD domains-containing protein 13 (NLRP13) from Homo sapiens (Human).